The primary structure comprises 132 residues: Ribosome-binding factor A (132 aa).

This sequence belongs to the RbfA family. Monomer. Binds 30S ribosomal subunits, but not 50S ribosomal subunits or 70S ribosomes.

Its subcellular location is the cytoplasm. One of several proteins that assist in the late maturation steps of the functional core of the 30S ribosomal subunit. Associates with free 30S ribosomal subunits (but not with 30S subunits that are part of 70S ribosomes or polysomes). Required for efficient processing of 16S rRNA. May interact with the 5'-terminal helix region of 16S rRNA. This Pectobacterium atrosepticum (strain SCRI 1043 / ATCC BAA-672) (Erwinia carotovora subsp. atroseptica) protein is Ribosome-binding factor A.